The following is a 295-amino-acid chain: 3-hydroxy-5-phosphonooxypentane-2,4-dione thiolase (295 aa).

The active-site Schiff-base intermediate with substrate is Lys203.

The protein belongs to the DeoC/FbaB aldolase family. In terms of assembly, homodecamer.

The protein resides in the cytoplasm. It carries out the reaction dihydroxyacetone phosphate + acetyl-CoA = 3-hydroxy-2,4-dioxopentyl phosphate + CoA. In terms of biological role, involved in the degradation of phospho-AI-2, thereby terminating induction of the lsr operon and closing the AI-2 signaling cycle. Catalyzes the transfer of an acetyl moiety from 3-hydroxy-5-phosphonooxypentane-2,4-dione to CoA to form glycerone phosphate and acetyl-CoA. This is 3-hydroxy-5-phosphonooxypentane-2,4-dione thiolase from Enterobacter sp. (strain 638).